Consider the following 62-residue polypeptide: Large ribosomal subunit protein bL28 (62 aa).

Belongs to the bacterial ribosomal protein bL28 family.

This chain is Large ribosomal subunit protein bL28, found in Streptococcus mutans serotype c (strain ATCC 700610 / UA159).